Consider the following 207-residue polypeptide: N-(5'-phosphoribosyl)anthranilate isomerase (207 aa).

It belongs to the TrpF family.

The enzyme catalyses N-(5-phospho-beta-D-ribosyl)anthranilate = 1-(2-carboxyphenylamino)-1-deoxy-D-ribulose 5-phosphate. It functions in the pathway amino-acid biosynthesis; L-tryptophan biosynthesis; L-tryptophan from chorismate: step 3/5. This is N-(5'-phosphoribosyl)anthranilate isomerase from Legionella pneumophila subsp. pneumophila (strain Philadelphia 1 / ATCC 33152 / DSM 7513).